The sequence spans 133 residues: Small ribosomal subunit protein uS8 (133 aa).

It belongs to the universal ribosomal protein uS8 family. Part of the 30S ribosomal subunit. Contacts proteins S5 and S12.

Its function is as follows. One of the primary rRNA binding proteins, it binds directly to 16S rRNA central domain where it helps coordinate assembly of the platform of the 30S subunit. This is Small ribosomal subunit protein uS8 from Thermosynechococcus vestitus (strain NIES-2133 / IAM M-273 / BP-1).